Reading from the N-terminus, the 430-residue chain is MENPFEITAVVAREILDSRGNPTVEVEVYTPVSMGRAAVPSGASTGTHEALELRDGGKRFHGKGVRRAVENVNKIIAPEIIGMDVTWQRDIDMLMIELDGTENKSNLGANAILGVSLAVAKAAANALGLPLYQYIGGTNAYVMPVPMSNVINGGVHAGNELDFQEFMIMPVGAKSFREGIRWVSETYHTLKKVIAEKYGKNAVNVGDEGGFAPPMKEVTEPLEVLIKAIEEAGYKPGDEIAFALDAASSEFYDEKLGKYVVGGKEYDRGELLELYRELVSKYPIVSIEDPFHEEDWEGFVMITRELGGKIQIVGDDLFVTNPKRIRKGIEMGAANALLLKVNQIGTLSEAIDAAYTAFRAGYGVVVSHRSGETEDATIADLAVALNAGQIKTGAPARSDRNAKYNQLIRIEEELEGIAVYPGKRFRNPFL.

Gln-164 contributes to the (2R)-2-phosphoglycerate binding site. Glu-208 (proton donor) is an active-site residue. Asp-245, Glu-288, and Asp-315 together coordinate Mg(2+). Positions 340, 369, 370, and 391 each coordinate (2R)-2-phosphoglycerate. The active-site Proton acceptor is the Lys-340.

Belongs to the enolase family. The cofactor is Mg(2+).

The protein resides in the cytoplasm. It is found in the secreted. The protein localises to the cell surface. It catalyses the reaction (2R)-2-phosphoglycerate = phosphoenolpyruvate + H2O. The protein operates within carbohydrate degradation; glycolysis; pyruvate from D-glyceraldehyde 3-phosphate: step 4/5. Its function is as follows. Catalyzes the reversible conversion of 2-phosphoglycerate (2-PG) into phosphoenolpyruvate (PEP). It is essential for the degradation of carbohydrates via glycolysis. This is Enolase from Thermococcus gammatolerans (strain DSM 15229 / JCM 11827 / EJ3).